A 637-amino-acid chain; its full sequence is MQDVVNSEKLKFDAEVGKVLKLVIHSLYTNKDIFLRELISNASDACDKLRYESLSNQDLIDGDTDFKIVISVDQDKNRLYISDNGIGMNRQDLIDNLGTIAHSGTQRFLDAINNETSSQGVVELIGKFGVGFYSAFMVASEVIVESRKAGESIGYQWRSAGDGEFIISQLEDGQFPRGTKITLILKTEESEFVDKFRIEHIVTTYSYHINYPVYFLNDAGEEEKLNSDAAIWTKSKDEISAQEHQNFFRSVAHVGGEPWMILHNKNEGVIEYTNLLYIPSIKPFDLFHPDRKCSVKLYVNKVFITEDNVQIIPQYLRFLKGIIDSSDLPLNISRETLQNNKVIEKIKQSIVKRVLSELKKKAENDINDYKKFWENFGSVLKEGLCESMNTEFREELLSACRFYSTNSDDSLISLEDYIERMKEGQDNIYYLTGNDLDSIKKSPQLEGFVSRGIEVILLIDPVDDFWTNVVTDYQRVPLKSVIRADEDLEKLAHLKKDEEVGESKDENPDSKEKVDAFVKYAIQVLDKLVSGVRVSKKLTNSPVCLAVADGSMDIRMERFLREQKQLNYKSTKILEINPKHPIVSRMIDEYANTGENAVLDNMLHLLLGQACILEGEELEDVSSFAERMNNVLVKVYQ.

Residues 1–334 form an a; substrate-binding region; the sequence is MQDVVNSEKL…SSDLPLNISR (334 aa). Residues 335 to 558 are b; it reads ETLQNNKVIE…DGSMDIRMER (224 aa). The c stretch occupies residues 559–637; sequence FLREQKQLNY…MNNVLVKVYQ (79 aa).

It belongs to the heat shock protein 90 family. In terms of assembly, homodimer.

It is found in the cytoplasm. In terms of biological role, molecular chaperone. Has ATPase activity. This Ehrlichia canis (strain Jake) protein is Chaperone protein HtpG.